Here is a 288-residue protein sequence, read N- to C-terminus: Phosphatidylserine decarboxylase proenzyme (288 aa).

Active-site charge relay system; for autoendoproteolytic cleavage activity residues include aspartate 90, histidine 147, and serine 252. Residue serine 252 is the Schiff-base intermediate with substrate; via pyruvic acid; for decarboxylase activity of the active site. At serine 252 the chain carries Pyruvic acid (Ser); by autocatalysis.

It belongs to the phosphatidylserine decarboxylase family. PSD-B subfamily. Prokaryotic type I sub-subfamily. Heterodimer of a large membrane-associated beta subunit and a small pyruvoyl-containing alpha subunit. Pyruvate serves as cofactor. Is synthesized initially as an inactive proenzyme. Formation of the active enzyme involves a self-maturation process in which the active site pyruvoyl group is generated from an internal serine residue via an autocatalytic post-translational modification. Two non-identical subunits are generated from the proenzyme in this reaction, and the pyruvate is formed at the N-terminus of the alpha chain, which is derived from the carboxyl end of the proenzyme. The autoendoproteolytic cleavage occurs by a canonical serine protease mechanism, in which the side chain hydroxyl group of the serine supplies its oxygen atom to form the C-terminus of the beta chain, while the remainder of the serine residue undergoes an oxidative deamination to produce ammonia and the pyruvoyl prosthetic group on the alpha chain. During this reaction, the Ser that is part of the protease active site of the proenzyme becomes the pyruvoyl prosthetic group, which constitutes an essential element of the active site of the mature decarboxylase.

It is found in the cell membrane. The enzyme catalyses a 1,2-diacyl-sn-glycero-3-phospho-L-serine + H(+) = a 1,2-diacyl-sn-glycero-3-phosphoethanolamine + CO2. It functions in the pathway phospholipid metabolism; phosphatidylethanolamine biosynthesis; phosphatidylethanolamine from CDP-diacylglycerol: step 2/2. In terms of biological role, catalyzes the formation of phosphatidylethanolamine (PtdEtn) from phosphatidylserine (PtdSer). The sequence is that of Phosphatidylserine decarboxylase proenzyme from Pseudomonas fluorescens (strain ATCC BAA-477 / NRRL B-23932 / Pf-5).